The primary structure comprises 274 residues: Penicillin-insensitive murein endopeptidase (274 aa).

The N-terminal stretch at 1-19 (MKKTAIALLAWFVSSASLA) is a signal peptide. 3 disulfides stabilise this stretch: C44–C265, C187–C235, and C216–C223. Residues H110, H113, D120, D147, H150, and H211 each contribute to the Zn(2+) site. A disordered region spans residues 225–274 (DQPLPPPGDGCGAELQSWFEPPKPGTTKPEKKTPPPLPPSCQALLDEHVL).

It belongs to the peptidase M74 family. As to quaternary structure, dimer. Requires Zn(2+) as cofactor.

The protein resides in the periplasm. In terms of biological role, murein endopeptidase that cleaves the D-alanyl-meso-2,6-diamino-pimelyl amide bond that connects peptidoglycan strands. Likely plays a role in the removal of murein from the sacculus. This Salmonella choleraesuis (strain SC-B67) protein is Penicillin-insensitive murein endopeptidase.